A 115-amino-acid chain; its full sequence is UPF0102 protein NMB2089 (115 aa).

It belongs to the UPF0102 family.

This chain is UPF0102 protein NMB2089, found in Neisseria meningitidis serogroup B (strain ATCC BAA-335 / MC58).